A 386-amino-acid polypeptide reads, in one-letter code: MKNFILLAVSSILLVDLFPTHCGHNVDLSKAINLNGVNFNNVDASSLGAAHVGQSASRGRGLGENPDDEEGDAKKKKDGKKAEPKNPRENKLKQPGDRADGQPAGDRADGQPAGDRADGQPAGDRADGQPAGDRADGQPAGDRAAGQPAGDRADGQPAGDRADGQPAGDRAAGQPAGDRAAGQPAGDRADGQPAGDRADGQPAGDRADGQPAGDRAAGQPAGDRAAGQPAGDRAAGQPAGDRAAGQPAGDRAAGQPAGDRAAGQPAGDRAAGQPAGNGAGGQAAGGNAGGQGQNNEGANAPNEKSVKEYLDKVRATVGTEWTPCSVTCGVGVRVRRRVNAANKKPEDLTLNDLETDVCTMDKCAGIFNVVSNSLGLVILLVLALFN.

Residues 1 to 22 form the signal peptide; sequence MKNFILLAVSSILLVDLFPTHC. The interval 51-304 is disordered; it reads HVGQSASRGR…NEGANAPNEK (254 aa). Residues 72–100 show a composition bias toward basic and acidic residues; the sequence is DAKKKKDGKKAEPKNPRENKLKQPGDRAD. Residues 80–88 are required for the binding to heparan sulfate proteoglycans (HSPGs) on the surface of host hepatocytes; that stretch reads KKAEPKNPR. Residues 91-95 form a region I; contains the proteolytic cleavage site region; that stretch reads KLKQP. 20 repeat units span residues 96-104, 105-113, 114-122, 123-131, 132-140, 141-149, 150-158, 159-167, 168-176, 177-185, 186-194, 195-203, 204-212, 213-221, 222-230, 231-239, 240-248, 249-257, 258-266, and 267-275. Residues 96–275 are 20 X 9 AA tandem repeats of G-D-R-A-[AD]-G-Q-P-A; it reads GDRADGQPAG…AGDRAAGQPA (180 aa). Residues 275–292 show a composition bias toward gly residues; the sequence is AGNGAGGQAAGGNAGGQG. Residues 293–303 show a composition bias toward low complexity; the sequence is QNNEGANAPNE. One can recognise a TSP type-1 domain in the interval 312 to 364; the sequence is KVRATVGTEWTPCSVTCGVGVRVRRRVNAANKKPEDLTLNDLETDVCTMDKCA. 2 cysteine pairs are disulfide-bonded: cysteine 324-cysteine 358 and cysteine 328-cysteine 363. O-linked (Fuc) threonine glycosylation occurs at threonine 327. Cysteine 363 carries GPI-anchor amidated cysteine lipidation. The propeptide at 364-386 is removed in mature form; sequence AGIFNVVSNSLGLVILLVLALFN.

It belongs to the plasmodium circumsporozoite protein family. In terms of processing, during host cell invasion, proteolytically cleaved at the cell membrane in the region I by a papain-like cysteine protease of parasite origin. Cleavage is triggered by the sporozoite contact with highly sulfated heparan sulfate proteoglycans (HSPGs) present on the host hepatocyte cell surface. Cleavage exposes the TSP type-1 (TSR) domain and is required for productive invasion of host hepatocytes but not for adhesion to the host cell membrane. Cleavage is dispensable for sporozoite development in the oocyst, motility and for traversal of host and vector cells. O-glycosylated; maybe by POFUT2.

Its subcellular location is the cell membrane. It localises to the cytoplasm. Its function is as follows. Essential sporozoite protein. In the mosquito vector, required for sporozoite development in the oocyst, migration through the vector hemolymph and entry into the vector salivary glands. In the vertebrate host, required for sporozoite migration through the host dermis and infection of host hepatocytes. Binds to highly sulfated heparan sulfate proteoglycans (HSPGs) on the surface of host hepatocytes. Functionally, in the vertebrate host, binds to highly sulfated heparan sulfate proteoglycans (HSPGs) on the surface of host hepatocytes and is required for sporozoite invasion of the host hepatocytes. The sequence is that of Circumsporozoite protein from Plasmodium simium.